Reading from the N-terminus, the 136-residue chain is Organic hydroperoxide resistance protein OhrB (136 aa).

Belongs to the OsmC/Ohr family.

In terms of biological role, involved in organic hydroperoxide resistance. This chain is Organic hydroperoxide resistance protein OhrB (ohrB), found in Bacillus subtilis (strain 168).